The sequence spans 378 residues: Endopolygalacturonase I (378 aa).

The N-terminal stretch at 1–20 is a signal peptide; it reads MHLNTTLLVSLALGAASVLA. Residues 21–39 constitute a propeptide that is removed on maturation; sequence SPAPPAITAPPTAEEIAKR. Cys-43 and Cys-61 form a disulfide bridge. The O-linked (Man...) threonine glycan is linked to Thr-44. Ser-46, Ser-48, Ser-52, Ser-53, Ser-55, Ser-57, and Ser-62 each carry an O-linked (Man...) serine glycan. Thr-63 carries O-linked (Man...) threonine glycosylation. Ser-73 carries an O-linked (Man...) serine glycan. 5 PbH1 repeats span residues 174-204, 205-226, 227-247, 256-277, and 285-307; these read SDYL…DIGT, STYV…AVNS, GENI…SIGS, VKNV…RIKT, and VSDV…VVQQ. The Proton donor role is filled by Asp-219. Cys-221 and Cys-237 form a disulfide bridge. His-241 is a catalytic residue. An N-linked (GlcNAc...) asparagine glycan is attached at Asn-258. 2 cysteine pairs are disulfide-bonded: Cys-345/Cys-350 and Cys-369/Cys-378.

This sequence belongs to the glycosyl hydrolase 28 family.

It is found in the secreted. It catalyses the reaction (1,4-alpha-D-galacturonosyl)n+m + H2O = (1,4-alpha-D-galacturonosyl)n + (1,4-alpha-D-galacturonosyl)m.. Its function is as follows. Involved in maceration and soft-rotting of plant tissue. Hydrolyzes the 1,4-alpha glycosidic bonds of de-esterified pectate in the smooth region of the plant cell wall. In Aspergillus aculeatus, this protein is Endopolygalacturonase I (pgaI).